We begin with the raw amino-acid sequence, 134 residues long: Transcription factor atoh7 (134 aa).

Positions 1–27 (MKPRRPSCADSGSDSDSRDPEKFESAM) are disordered. The span at 15–27 (SDSRDPEKFESAM) shows a compositional bias: basic and acidic residues. The region spanning 28–80 (RRRMAANARERKRMQGLNTAFDRLRKVVPQWGQDKKLSKYETLQMALSYIMAL) is the bHLH domain.

The protein resides in the nucleus. The protein localises to the perikaryon. It is found in the cell projection. It localises to the axon. Functionally, transcription factor that binds to DNA at the consensus sequence 5'-CAG[GC]TG-3'. Involved in the differentiation of retinal ganglion cells, photoreceptor population and optic nerve development. Required for retinal circadian rhythm photoentrainment. The polypeptide is Transcription factor atoh7 (Danio rerio (Zebrafish)).